A 523-amino-acid chain; its full sequence is Maintenance of mitochondrial morphology protein 1 (523 aa).

Topologically, residues 1–43 (MAGSTSASLQTPYFPSSTQINPVRVDHTLPLPPSQPSLSFTQG) are lumenal. Residues 44–64 (LLVGQLSVVLLIGAFIKFFIF) traverse the membrane as a helical segment. Residues 65-523 (GEAPPPPSRG…GSMPDTVTET (459 aa)) lie on the Cytoplasmic side of the membrane. Disordered regions lie at residues 70 to 118 (PPSR…SSST), 128 to 147 (YYSA…RLYH), 295 to 349 (TSDQ…SKHG), 420 to 474 (RTGL…DRGL), and 492 to 523 (GGHQ…VTET). Composition is skewed to polar residues over residues 74–96 (GLSN…TDSS) and 105–118 (STSN…SSST). Over residues 137–147 (TPKHGRPRLYH) the composition is skewed to basic residues. The SMP-LTD domain occupies 151-412 (QPESLDWFNV…EPRVQVVGLP (262 aa)). Positions 295–312 (TSDQTMSPIPTPHDTTSE) are enriched in polar residues. The segment covering 449–468 (GVSGGGGSGGGSGGGGGGMR) has biased composition (gly residues).

The protein belongs to the MMM1 family. As to quaternary structure, homodimer. Component of the ER-mitochondria encounter structure (ERMES) or MDM complex, composed of MMM1, MDM10, MDM12 and MDM34. An MMM1 homodimer associates with one molecule of MDM12 on each side in a pairwise head-to-tail manner, and the SMP-LTD domains of MMM1 and MDM12 generate a continuous hydrophobic tunnel for phospholipid trafficking.

It is found in the endoplasmic reticulum membrane. Its function is as follows. Component of the ERMES/MDM complex, which serves as a molecular tether to connect the endoplasmic reticulum (ER) and mitochondria. Components of this complex are involved in the control of mitochondrial shape and protein biogenesis, and function in nonvesicular lipid trafficking between the ER and mitochondria. The MDM12-MMM1 subcomplex functions in the major beta-barrel assembly pathway that is responsible for biogenesis of all outer membrane beta-barrel proteins, and acts in a late step after the SAM complex. The MDM10-MDM12-MMM1 subcomplex further acts in the TOM40-specific pathway after the action of the MDM12-MMM1 complex. Essential for establishing and maintaining the structure of mitochondria and maintenance of mtDNA nucleoids. This chain is Maintenance of mitochondrial morphology protein 1, found in Paracoccidioides lutzii (strain ATCC MYA-826 / Pb01) (Paracoccidioides brasiliensis).